A 386-amino-acid polypeptide reads, in one-letter code: ATP phosphoribosyltransferase regulatory subunit (386 aa).

It belongs to the class-II aminoacyl-tRNA synthetase family. HisZ subfamily. As to quaternary structure, heteromultimer composed of HisG and HisZ subunits.

The protein localises to the cytoplasm. It participates in amino-acid biosynthesis; L-histidine biosynthesis; L-histidine from 5-phospho-alpha-D-ribose 1-diphosphate: step 1/9. Its function is as follows. Required for the first step of histidine biosynthesis. May allow the feedback regulation of ATP phosphoribosyltransferase activity by histidine. This Variovorax paradoxus (strain S110) protein is ATP phosphoribosyltransferase regulatory subunit.